Reading from the N-terminus, the 807-residue chain is 85/88 kDa calcium-independent phospholipase A2 (807 aa).

S13 is modified (phosphoserine). 9 ANK repeats span residues 120–147, 151–181, 185–215, 219–248, 251–281, 286–312, 316–345, 349–378, and 382–403; these read WTVT…ANST, EGCT…QMDV, KGET…GLNQ, QGLT…RCNI, PGGF…QIHS, YGAS…DVDS, SGNT…NAGA, HGNT…EVDT, and FGET…KALL. The next 2 membrane-spanning stretches (helical) occupy residues 481–501 and 512–532; these read LLCL…LIAI and LFDW…ILHS. The PNPLA domain maps to 482 to 666; it reads LCLDGGGVKG…LANNPTLDAM (185 aa). Positions 486–491 match the GXGXXG motif; that stretch reads GGGVKG. The GXSXG motif lies at 518–522; it reads GTSTG. S520 (nucleophile) is an active-site residue. D653 (proton acceptor) is an active-site residue. The DGA/G motif lies at 653–655; the sequence is DGG. The interval 678–687 is calmodulin-binding (1-9-14 motif); sequence RKGQGNKVKK. The calmodulin-binding (IQ motif) stretch occupies residues 749 to 760; that stretch reads AWCEMVGIQYFR.

As to quaternary structure, homodimer formed by catalytic domains tightly interacting through a large hydrophobic interface. The contact area involves 3 alpha helices, several loops and a part of the beta sheet from each monomer. Both active sites of the dimer are in close proximity adopting an open conformation that provide sufficient space for phospholipid access and favoring cooperativity in deacylation-reacylation reactions. Each monomer has 9 ankyrin repeats stacked side-by-side in an elongated structure oriented outwards from the catalytic core. Expressed in neurons of central and peripheral nervous system. Highly expressed in Purkinje cells in cerebellum and dorsal and ventral horn neurons in the spinal cord. Expressed in testis (at protein level). Expressed in skeletal muscle (at protein level).

It localises to the cytoplasm. The protein localises to the cell membrane. Its subcellular location is the mitochondrion. The protein resides in the cell projection. It is found in the pseudopodium. The catalysed reaction is a 1,2-diacyl-sn-glycero-3-phosphocholine + H2O = a 1-acyl-sn-glycero-3-phosphocholine + a fatty acid + H(+). It catalyses the reaction a 1-O-alkyl-2-acyl-sn-glycero-3-phosphocholine + H2O = a 1-O-alkyl-sn-glycero-3-phosphocholine + a fatty acid + H(+). The enzyme catalyses 1,2-dihexadecanoyl-sn-glycero-3-phosphocholine + H2O = 1-hexadecanoyl-sn-glycero-3-phosphocholine + hexadecanoate + H(+). It carries out the reaction 1-hexadecanoyl-2-(9Z-octadecenoyl)-sn-glycero-3-phosphocholine + H2O = 1-hexadecanoyl-sn-glycero-3-phosphocholine + (9Z)-octadecenoate + H(+). The catalysed reaction is 1-hexadecanoyl-2-(9Z,12Z-octadecadienoyl)-sn-glycero-3-phosphocholine + H2O = (9Z,12Z)-octadecadienoate + 1-hexadecanoyl-sn-glycero-3-phosphocholine + H(+). It catalyses the reaction 1-hexadecanoyl-2-(5Z,8Z,11Z,14Z-eicosatetraenoyl)-sn-glycero-3-phosphocholine + H2O = 1-hexadecanoyl-sn-glycero-3-phosphocholine + (5Z,8Z,11Z,14Z)-eicosatetraenoate + H(+). The enzyme catalyses 1-octadecanoyl-2-(5Z,8Z,11Z,14Z-eicosatetraenoyl)-sn-glycero-3-phosphocholine + H2O = 1-octadecanoyl-sn-glycero-3-phosphocholine + (5Z,8Z,11Z,14Z)-eicosatetraenoate + H(+). It carries out the reaction 1-hexadecanoyl-2-(5Z,8Z,11Z,14Z-eicosatetraenoyl)-sn-glycero-3-phosphoethanolamine + H2O = 1-hexadecanoyl-sn-glycero-3-phosphoethanolamine + (5Z,8Z,11Z,14Z)-eicosatetraenoate + H(+). The catalysed reaction is 1,2-dihexadecanoyl-sn-glycero-3-phosphate + H2O = 1-hexadecanoyl-sn-glycero-3-phosphate + hexadecanoate + H(+). It catalyses the reaction a 1-acyl-sn-glycero-3-phosphocholine + H2O = sn-glycerol 3-phosphocholine + a fatty acid + H(+). The enzyme catalyses 1-hexadecanoyl-sn-glycero-3-phosphocholine + H2O = sn-glycerol 3-phosphocholine + hexadecanoate + H(+). It carries out the reaction 1-(5Z,8Z,11Z,14Z-eicosatetraenoyl)-sn-glycero-3-phosphocholine + H2O = sn-glycerol 3-phosphocholine + (5Z,8Z,11Z,14Z)-eicosatetraenoate + H(+). The catalysed reaction is 2-(5Z,8Z,11Z,14Z)-eicosatetraenoyl-sn-glycero-3-phosphocholine + H2O = sn-glycerol 3-phosphocholine + (5Z,8Z,11Z,14Z)-eicosatetraenoate + H(+). It catalyses the reaction 1-O-hexadecyl-2-(5Z,8Z,11Z,14Z)-eicosatetraenoyl-sn-glycero-3-phosphocholine + H2O = 1-O-hexadecyl-sn-glycero-3-phosphocholine + (5Z,8Z,11Z,14Z)-eicosatetraenoate + H(+). The enzyme catalyses 1-O-hexadecyl-2-acetyl-sn-glycero-3-phosphocholine + H2O = 1-O-hexadecyl-sn-glycero-3-phosphocholine + acetate + H(+). It carries out the reaction hexadecanoyl-CoA + H2O = hexadecanoate + CoA + H(+). The catalysed reaction is 1',3'-bis[1,2-di-(9Z-octadecenoyl)-sn-glycero-3-phospho]-glycerol + H2O = 1'-[1,2-di-(9Z-octadecenoyl)-sn-glycero-3-phospho]-3'-[1-(9Z-octadecenoyl)-sn-glycero-3-phospho]-glycerol + (9Z)-octadecenoate + H(+). It catalyses the reaction 1'-[1,2-di-(9Z-octadecenoyl)-sn-glycero-3-phospho]-3'-[1-(9Z-octadecenoyl)-sn-glycero-3-phospho]-glycerol + H2O = 1',3'-bis-[1-(9Z-octadecenoyl)-sn-glycero-3-phospho]-glycerol + (9Z)-octadecenoate + H(+). The enzyme catalyses 1',3'-bis-[1,2-di-(9Z,12Z-octadecadienoyl)-sn-glycero-3-phospho]-glycerol + H2O = 1'-[1,2-di-(9Z,12Z-octadecadienoyl)-sn-glycero-3-phospho]-3'-[1-(9Z,12Z-octadecadienoyl)-sn-glycero-3-phospho]-glycerol + (9Z,12Z)-octadecadienoate + H(+). It carries out the reaction 1-octadecanoyl-2-(15-hydroxy-(5Z,8Z,11Z,13E)-eicosatetraenoyl)-sn-glycero-3-phosphoethanolamine + H2O = 1-octadecanoyl-sn-glycero-3-phosphoethanolamine + 15-hydroxy-(5Z,8Z,11Z,13E)-eicosatetraenoate + H(+). Inhibited by calcium-activated calmodulin. Activated by ATP. Inhibited by bromoenol lactone (BEL). In terms of biological role, calcium-independent phospholipase involved in phospholipid remodeling with implications in cellular membrane homeostasis, mitochondrial integrity and signal transduction. Hydrolyzes the ester bond of the fatty acyl group attached at sn-1 or sn-2 position of phospholipids (phospholipase A1 and A2 activity respectively), producing lysophospholipids that are used in deacylation-reacylation cycles. Hydrolyzes both saturated and unsaturated long fatty acyl chains in various glycerophospholipid classes such as phosphatidylcholines, phosphatidylethanolamines and phosphatidates, with a preference for hydrolysis at sn-2 position. Can further hydrolyze lysophospholipids carrying saturated fatty acyl chains (lysophospholipase activity). Upon oxidative stress, contributes to remodeling of mitochondrial phospholipids in pancreatic beta cells, in a repair mechanism to reduce oxidized lipid content. Preferentially hydrolyzes oxidized polyunsaturated fatty acyl chains from cardiolipins, yielding monolysocardiolipins that can be reacylated with unoxidized fatty acyls to regenerate native cardiolipin species. Hydrolyzes oxidized glycerophosphoethanolamines present in pancreatic islets, releasing oxidized polyunsaturated fatty acids such as hydroxyeicosatetraenoates (HETEs). Has thioesterase activity toward fatty-acyl CoA releasing CoA-SH known to facilitate fatty acid transport and beta-oxidation in mitochondria particularly in skeletal muscle. Plays a role in regulation of membrane dynamics and homeostasis. Selectively hydrolyzes sn-2 arachidonoyl group in plasmalogen phospholipids, structural components of lipid rafts and myelin. Regulates F-actin polymerization at the pseudopods, which is required for both speed and directionality of MCP1/CCL2-induced monocyte chemotaxis. Targets membrane phospholipids to produce potent lipid signaling messengers. Generates lysophosphatidate (LPA, 1-acyl-glycerol-3-phosphate), which acts via G-protein receptors in various cell types. Has phospholipase A2 activity toward platelet-activating factor (PAF, 1-O-alkyl-2-acetyl-sn-glycero-3-phosphocholine), likely playing a role in inactivation of this potent pro-inflammatory signaling lipid. In response to glucose, amplifies calcium influx in pancreatic beta cells to promote INS secretion. In Mus musculus (Mouse), this protein is 85/88 kDa calcium-independent phospholipase A2 (Pla2g6).